We begin with the raw amino-acid sequence, 153 residues long: Small ribosomal subunit protein uS13 (153 aa).

The tract at residues 129–153 is disordered; sequence RGQRTKSTFRHGSSVGVSRTRPTGN. Over residues 143 to 153 the composition is skewed to polar residues; sequence VGVSRTRPTGN.

This sequence belongs to the universal ribosomal protein uS13 family. Part of the 30S ribosomal subunit. Forms a loose heterodimer with protein S19. Forms two bridges to the 50S subunit in the 70S ribosome.

Its function is as follows. Located at the top of the head of the 30S subunit, it contacts several helices of the 16S rRNA. In the 70S ribosome it contacts the 23S rRNA (bridge B1a) and protein L5 of the 50S subunit (bridge B1b), connecting the 2 subunits; these bridges are implicated in subunit movement. The chain is Small ribosomal subunit protein uS13 from Methanosphaera stadtmanae (strain ATCC 43021 / DSM 3091 / JCM 11832 / MCB-3).